Reading from the N-terminus, the 433-residue chain is V-type ATP synthase beta chain (433 aa).

The protein belongs to the ATPase alpha/beta chains family.

In terms of biological role, produces ATP from ADP in the presence of a proton gradient across the membrane. The V-type beta chain is a regulatory subunit. The polypeptide is V-type ATP synthase beta chain (Borrelia turicatae (strain 91E135)).